A 316-amino-acid chain; its full sequence is Cell division protein FtsQ (316 aa).

The tract at residues 1–34 is disordered; the sequence is MAKAARRTKSAPARRSPRRHARQTGATIRRPKRP. The Cytoplasmic portion of the chain corresponds to 1–61; the sequence is MAKAARRTKS…HPLLKQMAKR (61 aa). Residues 62–80 form a helical membrane-spanning segment; it reads LLLILVIVGFLAGLWAARW. Residues 81–316 lie on the Periplasmic side of the membrane; that stretch reads PQLLATKTGE…AADPLVSDRI (236 aa). Positions 97 to 165 constitute a POTRA domain; the sequence is FSVRHVEIVG…DTLVVDIVER (69 aa). A disordered region spans residues 295–316; it reads PEPVKKATKPAKAADPLVSDRI.

This sequence belongs to the FtsQ/DivIB family. FtsQ subfamily.

The protein resides in the cell inner membrane. Its function is as follows. Essential cell division protein. In Zymomonas mobilis subsp. mobilis (strain ATCC 31821 / ZM4 / CP4), this protein is Cell division protein FtsQ.